The sequence spans 335 residues: Rho guanine nucleotide exchange factor 39 (335 aa).

In terms of domain architecture, DH spans 22 to 197 (KRACTARELL…SETAQRVHTI (176 aa)). Positions 227-331 (WFLRQGWLLV…WYHSLTLAIS (105 aa)) constitute a PH domain.

Its subcellular location is the cell membrane. Promotes cell proliferation. In Bos taurus (Bovine), this protein is Rho guanine nucleotide exchange factor 39 (ARHGEF39).